The primary structure comprises 277 residues: Polar tube protein 2 (277 aa).

The first 18 residues, 1–18, serve as a signal peptide directing secretion; that stretch reads MLLLLAITAVVSATMVHP. Asn134 carries N-linked (GlcNAc...) asparagine glycosylation. Residues 237-251 are compositionally biased toward basic and acidic residues; sequence QKKEVKDTKEGEKSA. The disordered stretch occupies residues 237–277; the sequence is QKKEVKDTKEGEKSASQDSDGEGTAEDAEVQQPSADGEGLE. Residues 255-265 are compositionally biased toward acidic residues; sequence SDGEGTAEDAE.

In terms of assembly, interacts with PTP1 and PTP3.

The protein localises to the spore polar tube. Involved in formation of a polar tube through which the infectious agent is passed on to the host cell. The chain is Polar tube protein 2 (PTP2) from Encephalitozoon cuniculi (strain GB-M1) (Microsporidian parasite).